The chain runs to 117 residues: Large ribosomal subunit protein uL18 (117 aa).

This sequence belongs to the universal ribosomal protein uL18 family. In terms of assembly, part of the 50S ribosomal subunit; part of the 5S rRNA/L5/L18/L25 subcomplex. Contacts the 5S and 23S rRNAs.

This is one of the proteins that bind and probably mediate the attachment of the 5S RNA into the large ribosomal subunit, where it forms part of the central protuberance. The chain is Large ribosomal subunit protein uL18 from Proteus mirabilis (strain HI4320).